Reading from the N-terminus, the 231-residue chain is Ribonuclease 3 (231 aa).

In terms of domain architecture, RNase III spans 12-139 (LKAFLQKNNI…LIAAIYLDQG (128 aa)). Glu52 provides a ligand contact to Mg(2+). Residue Asp56 is part of the active site. 2 residues coordinate Mg(2+): Asp125 and Glu128. Glu128 is a catalytic residue. The 67-residue stretch at 165-231 (DPKSELQEYF…AANALSKLKT (67 aa)) folds into the DRBM domain.

It belongs to the ribonuclease III family. In terms of assembly, homodimer. Mg(2+) serves as cofactor.

The protein resides in the cytoplasm. It carries out the reaction Endonucleolytic cleavage to 5'-phosphomonoester.. Digests double-stranded RNA. Involved in the processing of primary rRNA transcript to yield the immediate precursors to the large and small rRNAs (23S and 16S). Processes some mRNAs, and tRNAs when they are encoded in the rRNA operon. Processes pre-crRNA and tracrRNA of type II CRISPR loci if present in the organism. This Mycoplasmopsis synoviae (strain 53) (Mycoplasma synoviae) protein is Ribonuclease 3.